A 584-amino-acid chain; its full sequence is Arginine--tRNA ligase (584 aa).

Residues Pro-127 to His-137 carry the 'HIGH' region motif.

Belongs to the class-I aminoacyl-tRNA synthetase family. Monomer.

The protein resides in the cytoplasm. It catalyses the reaction tRNA(Arg) + L-arginine + ATP = L-arginyl-tRNA(Arg) + AMP + diphosphate. In Borrelia turicatae (strain 91E135), this protein is Arginine--tRNA ligase.